The primary structure comprises 286 residues: NAD kinase (286 aa).

Aspartate 74 functions as the Proton acceptor in the catalytic mechanism. Residues 74–75 (DG), 148–149 (ND), aspartate 178, alanine 186, 189–194 (TAYNLS), and glutamine 244 contribute to the NAD(+) site.

Belongs to the NAD kinase family. The cofactor is a divalent metal cation.

Its subcellular location is the cytoplasm. The enzyme catalyses NAD(+) + ATP = ADP + NADP(+) + H(+). Involved in the regulation of the intracellular balance of NAD and NADP, and is a key enzyme in the biosynthesis of NADP. Catalyzes specifically the phosphorylation on 2'-hydroxyl of the adenosine moiety of NAD to yield NADP. The chain is NAD kinase from Campylobacter jejuni subsp. jejuni serotype O:2 (strain ATCC 700819 / NCTC 11168).